We begin with the raw amino-acid sequence, 298 residues long: Max-like protein X (298 aa).

Positions 1 to 63 are disordered; it reads MTEPGASPED…ARGCREDSSH (63 aa). The residue at position 7 (S7) is a Phosphoserine. Positions 28-37 are enriched in basic residues; that stretch reads GRARARRGSG. S45, S48, S74, S77, and S98 each carry phosphoserine. The span at 98 to 109 shows a compositional bias: polar residues; it reads SIGSTSASSVPN. A disordered region spans residues 98–119; sequence SIGSTSASSVPNTDDEDSDYQQ. In terms of domain architecture, bHLH spans 129–187; that stretch reads RRRRAHTQAEQKRRDAIKRGYDDLQTIVPTCQQQDFSIGSQKLSKAIVLQKTIDYIQFL. The interval 194–214 is leucine-zipper; it reads QEEEVSTLRKDVTALKIMKVN.

In terms of assembly, efficient DNA binding requires dimerization with another bHLH protein. Binds DNA as a heterodimer with MAD1, MAD4, MNT, WBSCR14 and MLXIP. Can also bind DNA as a homodimer. Expressed in all tissues examined: stomach, duodenum, jejunum, ileum, colon, liver, pancreas, salivary gland, kidney, spleen, lung, heart, skeletal muscle, brain, ovary and testis.

The protein resides in the cytoplasm. It localises to the nucleus. In terms of biological role, transcription regulator. Forms a sequence-specific DNA-binding protein complex with MAD1, MAD4, MNT, WBSCR14 and MLXIP which recognizes the core sequence 5'-CACGTG-3'. The TCFL4-MAD1, TCFL4-MAD4, TCFL4-WBSCR14 complexes are transcriptional repressors. Plays a role in transcriptional activation of glycolytic target genes. Involved in glucose-responsive gene regulation. The protein is Max-like protein X (Mlx) of Mus musculus (Mouse).